Here is a 527-residue protein sequence, read N- to C-terminus: Zinc finger imprinted 2 (527 aa).

The span at 1–16 shows a compositional bias: acidic residues; that stretch reads MYQPEDDNNSDVTSDD. Positions 1-104 are disordered; sequence MYQPEDDNNS…SRSQDAESYQ (104 aa). 3 stretches are compositionally biased toward basic and acidic residues: residues 17 to 26, 35 to 56, and 80 to 99; these read DMTRNRRESS, SGDR…DRWS, and FEMD…RSQD. The 71-residue stretch at 176 to 246 folds into the KRAB domain; it reads VTFEDVLVDF…ETDSRHTVIC (71 aa). The segment at 247–322 is disordered; sequence QGESHDDPLE…GICTSPQSAS (76 aa). Over residues 259 to 275 the composition is skewed to polar residues; it reads QGNQEKLLTPITMNDPK. Over residues 297 to 307 the composition is skewed to basic and acidic residues; the sequence is QSKDPLGKDPQ. 5 C2H2-type zinc fingers span residues 328 to 350, 356 to 378, 412 to 434, 466 to 488, and 494 to 516; these read NRCE…ERIH, YECK…QKTH, FECF…LKAH, CQCC…YRTH, and YQCQ…YQLH.

It belongs to the krueppel C2H2-type zinc-finger protein family. In terms of tissue distribution, highest levels of expression in adult testis; modest levels in fetal kidney and brain.

The protein localises to the nucleus. Functionally, may be involved in transcriptional regulation. This chain is Zinc finger imprinted 2 (ZIM2), found in Homo sapiens (Human).